The sequence spans 146 residues: Terminase small subunit (146 aa).

It belongs to the SPP1-like small terminase family. As to quaternary structure, homodecamer. Interacts with the terminase large subunit; the active complex is probably composed of a one monomer of the large subunit and two or more decamers of the small subunit.

Its function is as follows. The terminase small subunit specifically recognizes the non-adjacent pacL and pacR packaging subsites and regulates the ATPase activity of the terminase large subunit. The terminase lies at a unique vertex of the procapsid and is composed of two subunits, a small terminase subunit involved in viral DNA recognition (packaging sequence), and a large terminase subunit possessing endonucleolytic and ATPase activities. Both terminase subunits heterooligomerize and are docked on the portal protein to form the packaging machine. The terminase large subunit exhibits endonuclease activity and cleaves the viral genome concatemer once the capsid is full (headful packaging). Once the capsid is packaged with the DNA, the terminase complex is substituted by neck proteins. This chain is Terminase small subunit, found in Staphylococcus phage 80alpha.